Consider the following 356-residue polypeptide: MFPSLQSFAKKVLARQHVSIDHHIILERCGLWWYKAPISLDCKHMLIKLPNFADGLDLNTALMLATKENNYQLIKMFTDWGADINYGLICANTPPVREFCWELGAKYQVDKKKIMHIFFKLIHPSTTSSNIILCLKLFNDNPFSAYVIIREIKSCIHWKLKKLAEDTNVLSNISDGDMLTIYCFIVALQDNLREAISYVYQHFKYLNTWWLTCVLCYNKVFDLHHLYEKEKIRMDMDEMMRIACTKDNNFLTIYYCFILGANINLAMIASIQFYNIDNLFFCIDLGADAFEEAKALAEQRNYFLISHCLSLDIYSPDSSLLTLKEADPNKIYHLLKNYKSKSILAYLNYDVNNTTL.

One copy of the ANK repeat lies at 57-89 (DLNTALMLATKENNYQLIKMFTDWGADINYGLI). Residue N172 is glycosylated (N-linked (GlcNAc...) asparagine; by host). A helical membrane pass occupies residues 249–271 (NFLTIYYCFILGANINLAMIASI). N-linked (GlcNAc...) asparagine; by host glycosylation is found at N352 and N353.

The protein belongs to the asfivirus MGF 360 family.

The protein resides in the host membrane. Functionally, plays a role in virus cell tropism, and may be required for efficient virus replication in macrophages. The protein is Protein MGF 360-10L of African swine fever virus (isolate Tick/South Africa/Pretoriuskop Pr4/1996) (ASFV).